The primary structure comprises 158 residues: Transcription elongation factor GreA (158 aa).

The stretch at 2-70 forms a coiled coil; sequence ENQKQYPMTQ…IEQDIQRIEH (69 aa).

It belongs to the GreA/GreB family.

Functionally, necessary for efficient RNA polymerase transcription elongation past template-encoded arresting sites. The arresting sites in DNA have the property of trapping a certain fraction of elongating RNA polymerases that pass through, resulting in locked ternary complexes. Cleavage of the nascent transcript by cleavage factors such as GreA or GreB allows the resumption of elongation from the new 3'terminus. GreA releases sequences of 2 to 3 nucleotides. This chain is Transcription elongation factor GreA, found in Staphylococcus epidermidis (strain ATCC 35984 / DSM 28319 / BCRC 17069 / CCUG 31568 / BM 3577 / RP62A).